The sequence spans 162 residues: Caveolin-2 (162 aa).

The Cytoplasmic portion of the chain corresponds to 1–86 (MGLETEKADV…FEISKYIIYK (86 aa)). At Tyr19 the chain carries Phosphotyrosine; by SRC. Residues Ser20 and Ser23 each carry the phosphoserine modification. Tyr27 bears the Phosphotyrosine; by SRC mark. The helical intramembrane region spans 87–107 (FLTVFLAIPLAFAAGILFATL). At 108–162 (SCLHIWITMPFVKTCLMVLPSVQTIWKSVTDVAIAPLCTSVGRSFSSVSLQLSHD) the chain is on the cytoplasmic side.

The protein belongs to the caveolin family. Monomer or homodimer. Interacts with CAV1; the interaction forms a stable heterooligomeric complex that is required for targeting to lipid rafts and for caveolae formation. Tyrosine phosphorylated forms do not form heterooligomers with the Tyr-19-phosphorylated form existing as a monomer or dimer, and the Tyr-27-form as a monomer only. Interacts (tyrosine phosphorylated form) with the SH2 domain-containing proteins, RASA1, NCK1 and SRC. Interacts (tyrosine phosphorylated form) with INSR, the interaction (Tyr-27-phosphorylated form) is increased on insulin stimulation. Interacts (Tyr-19 phosphorylated form) with MAPK1 (phosphorylated form); the interaction, promoted by insulin, leads to nuclear location and MAPK1 activation. Interacts with STAT3; the interaction is increased on insulin-induced tyrosine phosphorylation leading to STAT activation. In terms of processing, phosphorylated on serine and tyrosine residues. CAV1 promotes phosphorylation on Ser-23 which then targets the complex to the plasma membrane, lipid rafts and caveolae. Phosphorylation on both Tyr-19 and Tyr-27 is required for insulin-induced 'Ser-727' phosphorylation of STAT3 and its activation. Phosphorylation on Tyr-19 is required for insulin-induced phosphorylation of MAPK1 and DNA binding of STAT3. Tyrosine phosphorylation is induced by both EGF and insulin.

The protein localises to the nucleus. Its subcellular location is the cytoplasm. The protein resides in the golgi apparatus membrane. It is found in the cell membrane. It localises to the membrane. The protein localises to the caveola. Functionally, may act as a scaffolding protein within caveolar membranes. Interacts directly with G-protein alpha subunits and can functionally regulate their activity. Acts as an accessory protein in conjunction with CAV1 in targeting to lipid rafts and driving caveolae formation. Positive regulator of cellular mitogenesis of the MAPK signaling pathway. Required for the insulin-stimulated nuclear translocation and activation of MAPK1 and STAT3, and the subsequent regulation of cell cycle progression. The chain is Caveolin-2 (CAV2) from Dasypus novemcinctus (Nine-banded armadillo).